The sequence spans 369 residues: Putative 2-aminoethylphosphonate import ATP-binding protein PhnT (369 aa).

The ABC transporter domain maps to 19-250 (IVLDSLRVAY…PPNRFAAEFL (232 aa)). Position 51–58 (51–58 (GPSGSGKT)) interacts with ATP.

Belongs to the ABC transporter superfamily. 2-aminoethylphosphonate importer (TC 3.A.1.11.5) family.

Its subcellular location is the cell inner membrane. Its function is as follows. Probably part of the PhnSTUV complex (TC 3.A.1.11.5) involved in 2-aminoethylphosphonate import. Probably responsible for energy coupling to the transport system. In Salmonella typhimurium (strain LT2 / SGSC1412 / ATCC 700720), this protein is Putative 2-aminoethylphosphonate import ATP-binding protein PhnT (phnT).